We begin with the raw amino-acid sequence, 179 residues long: Diphosphoinositol polyphosphate phosphohydrolase 2 (179 aa).

Residues Arg9, 17–19, and 38–40 each bind substrate; these read KKR and SSR. One can recognise a Nudix hydrolase domain in the interval 17-143; sequence KKRAACLCFR…VHAEYLERLK (127 aa). Mg(2+)-binding residues include Gly49 and Glu65. Positions 50 to 71 match the Nudix box motif; that stretch reads GGVEPEEEPGGAAAREVYEEAG. The active-site Proton acceptor is Glu68. Glu69 provides a ligand contact to Mg(2+). Residues 88–90, Arg114, and Lys132 each bind substrate; that span reads RKH.

The protein belongs to the Nudix hydrolase family. DIPP subfamily. The cofactor is Mg(2+). Mn(2+) serves as cofactor.

The protein localises to the cytoplasm. It catalyses the reaction diphospho-myo-inositol polyphosphate + H2O = myo-inositol polyphosphate + phosphate.. The enzyme catalyses 5-diphospho-1D-myo-inositol 1,2,3,4,6-pentakisphosphate + H2O = 1D-myo-inositol hexakisphosphate + phosphate + H(+). The catalysed reaction is 3,5-bis(diphospho)-1D-myo-inositol 1,2,4,6-tetrakisphosphate + H2O = 3-diphospho-1D-myo-inositol 1,2,4,5,6-pentakisphosphate + phosphate + 2 H(+). It carries out the reaction 5-diphospho-1D-myo-inositol 1,3,4,6-tetrakisphosphate + H2O = 1D-myo-inositol 1,3,4,5,6-pentakisphosphate + phosphate + H(+). It catalyses the reaction P(1),P(6)-bis(5'-adenosyl) hexaphosphate + H2O = 2 ATP + 2 H(+). The enzyme catalyses P(1),P(5)-bis(5'-adenosyl) pentaphosphate + H2O = ADP + ATP + 2 H(+). The catalysed reaction is 5-phospho-alpha-D-ribose 1-diphosphate + H2O = alpha-D-ribose 1,5-bisphosphate + phosphate + H(+). Functionally, cleaves the beta-phosphate from diphosphoinositol polyphosphates such as PP-InsP5 (diphosphoinositol pentakisphosphate), PP-InsP4 (diphosphoinositol tetrakisphosphate) and [PP]2-InsP4 (bisdiphosphoinositol tetrakisphosphate), suggesting that it may play a role in signal transduction. Diadenosine polyphosphates, particularly Ap6A (P(1),P(6)-bis(5a-adenosyl) hexaphosphate) and Ap5A (P(1),P(5)-bis(5'-adenosyl) pentaphosphate) are downstream effectors of a signaling cascade that regulates cardiac KATP channels, can also be substrates, although with lower preference than the diphosphoinositol polyphosphates. Can also catalyze the hydrolysis of 5-phosphoribose 1-diphosphate, generating the glycolytic activator ribose 1,5-bisphosphate. Does not play a role in U8 snoRNA decapping activity. Binds U8 snoRNA. The sequence is that of Diphosphoinositol polyphosphate phosphohydrolase 2 from Rattus norvegicus (Rat).